A 665-amino-acid polypeptide reads, in one-letter code: tRNA 5-methylaminomethyl-2-thiouridine biosynthesis bifunctional protein MnmC (665 aa).

The tract at residues 1 to 243 is tRNA (mnm(5)s(2)U34)-methyltransferase; that stretch reads MSQTSLHHAR…KWAMLAGERV (243 aa). Residues 268 to 665 form an FAD-dependent cmnm(5)s(2)U34 oxidoreductase region; that stretch reads IGGGIASAMT…RKLLKGKPLN (398 aa).

It in the N-terminal section; belongs to the methyltransferase superfamily. tRNA (mnm(5)s(2)U34)-methyltransferase family. This sequence in the C-terminal section; belongs to the DAO family. It depends on FAD as a cofactor.

The protein resides in the cytoplasm. It catalyses the reaction 5-aminomethyl-2-thiouridine(34) in tRNA + S-adenosyl-L-methionine = 5-methylaminomethyl-2-thiouridine(34) in tRNA + S-adenosyl-L-homocysteine + H(+). Catalyzes the last two steps in the biosynthesis of 5-methylaminomethyl-2-thiouridine (mnm(5)s(2)U) at the wobble position (U34) in tRNA. Catalyzes the FAD-dependent demodification of cmnm(5)s(2)U34 to nm(5)s(2)U34, followed by the transfer of a methyl group from S-adenosyl-L-methionine to nm(5)s(2)U34, to form mnm(5)s(2)U34. This is tRNA 5-methylaminomethyl-2-thiouridine biosynthesis bifunctional protein MnmC from Aeromonas salmonicida (strain A449).